A 439-amino-acid polypeptide reads, in one-letter code: MCCWQSRGLLVKRVLAIILGGGAGTRLYPLTKLRAKPAVPLAGKYRLIDIPVSNCINSEIVKIYVLTQFNSASLNRHISRAYNFSGFQEGFVEVLAAQQTKDNPDWFQGTADAVRQYLWLFREWDVDEYLILSGDHLYRMDYAQFVKRHRETNADITLSVVPVDDRKAPELGLMKIDAQGRITDFSEKPQGEALRAMQVDTSVLGLSAEKAKLNPYIASMGIYVFKKEVLHNLLEKYEGATDFGKEIIPDSASDHNLQAYLFDDYWEDIGTIEAFYEANLALTKQPSPDFSFYNEKAPIYTRGRYLPPTKMLNSTVTESMIGEGCMIKQCRIHHSVLGIRSRIESDCTIEDTLVMGNDFYESSSERDTLKARGEIAAGIGSGTTIRRAIIDKNARIGKNVMIVNKENVQEANREELGFYIRNGIVVVIKNVTIADGTVI.

Alpha-D-glucose 1-phosphate contacts are provided by residues Gly-172, 187–188 (EK), and Ser-219.

It belongs to the bacterial/plant glucose-1-phosphate adenylyltransferase family. In terms of assembly, homotetramer.

The catalysed reaction is alpha-D-glucose 1-phosphate + ATP + H(+) = ADP-alpha-D-glucose + diphosphate. Its pathway is glycan biosynthesis; glycogen biosynthesis. Involved in the biosynthesis of ADP-glucose, a building block required for the elongation reactions to produce glycogen. Catalyzes the reaction between ATP and alpha-D-glucose 1-phosphate (G1P) to produce pyrophosphate and ADP-Glc. This is Glucose-1-phosphate adenylyltransferase from Synechocystis sp. (strain ATCC 27184 / PCC 6803 / Kazusa).